A 136-amino-acid polypeptide reads, in one-letter code: Psoriasis susceptibility 1 candidate gene 2 protein homolog (136 aa).

Residues 1 to 22 form the signal peptide; it reads MILNWKLLGILVLCLHTRGISG. Residues 20-136 form a disordered region; that stretch reads ISGSEDHPSH…DLDPPREEYR (117 aa). The span at 23–33 shows a compositional bias: basic and acidic residues; sequence SEDHPSHPPAE. 2 stretches are compositionally biased toward pro residues: residues 44-74 and 83-116; these read PQGPPVPGDPWPGAPPLFEDPPPPHPSPPWR and PPEPPRTDPPQPPRPDDPWPAGPQPPENPWPPAP. The span at 117 to 136 shows a compositional bias: basic and acidic residues; the sequence is EVDHRPQEEPDLDPPREEYR.

The protein localises to the secreted. The polypeptide is Psoriasis susceptibility 1 candidate gene 2 protein homolog (PSORS1C2) (Pan troglodytes (Chimpanzee)).